Here is a 181-residue protein sequence, read N- to C-terminus: Large ribosomal subunit protein uL22 (181 aa).

Residues 157–181 (PEAAKKPGKKTSAVEKSKKATAATH) form a disordered region.

The protein belongs to the universal ribosomal protein uL22 family.

This Biphyllus lunatus (Beetle) protein is Large ribosomal subunit protein uL22 (RpL17).